Here is a 754-residue protein sequence, read N- to C-terminus: Fibronectin type III domain-containing protein 1 (754 aa).

Residues 1 to 19 (MKSWISISFLCMLFPLSNG) form the signal peptide. Disordered regions lie at residues 40–61 (SLQG…SQGG), 85–106 (AQIS…TQFS), and 130–163 (AQHS…AQSG). The segment covering 130–161 (AQHSQAGAQGSQFPQSAAHTAQHHQGTAQPAQ) has biased composition (low complexity). Fibronectin type-III domains lie at 250–355 (PPQS…TPDL), 359–449 (APLN…TDKF), 453–545 (APRN…TKMD), 549–642 (EPMS…LPKP), and 645–742 (LVPN…SFPG). Residues 731 to 754 (SNLSSQQFSFPGQQVGQQQSNPWI) are disordered.

Prismatic layer of shell (at protein level). Expressed primarily in the mantle with highest level in the outer epithelium of the mantle edge and lower level in the mantle pallium.

The protein localises to the secreted. The polypeptide is Fibronectin type III domain-containing protein 1 (Margaritifera margaritifera (Freshwater pearl mussel)).